Here is a 132-residue protein sequence, read N- to C-terminus: UPF0102 protein Achl_2213 (132 aa).

The protein belongs to the UPF0102 family.

This chain is UPF0102 protein Achl_2213, found in Pseudarthrobacter chlorophenolicus (strain ATCC 700700 / DSM 12829 / CIP 107037 / JCM 12360 / KCTC 9906 / NCIMB 13794 / A6) (Arthrobacter chlorophenolicus).